Consider the following 201-residue polypeptide: Small ribosomal subunit protein uS4 (201 aa).

The disordered stretch occupies residues 1-38 (MARYTGPATRKSRRLGVDLVGGDQSFEKRPYPPGQHGR). An S4 RNA-binding domain is found at 91 to 157 (SRLDNVVYRA…DPFVIARETA (67 aa)).

Belongs to the universal ribosomal protein uS4 family. In terms of assembly, part of the 30S ribosomal subunit. Contacts protein S5. The interaction surface between S4 and S5 is involved in control of translational fidelity.

One of the primary rRNA binding proteins, it binds directly to 16S rRNA where it nucleates assembly of the body of the 30S subunit. Functionally, with S5 and S12 plays an important role in translational accuracy. In Mycobacterium sp. (strain JLS), this protein is Small ribosomal subunit protein uS4.